A 529-amino-acid chain; its full sequence is MSQDTEVDMKEVELNELEPEKQPMNAASEAAVAMAVAGGAEKNGLVKIKVAEDEAEAAAKFTGLSKEELLKVAGSPGWVRTRWALLLLFWLGWIGMLAGAVVIIVRAPRCRELPVQRWWHKGALYRVGDLQAFQARDSGDLAGLKGHLDYLSTLKVKGLVLGPIHKNQEDDVAGTNLQEINPAVGSKEEFDSFLQSAKKKSIRVILDLTPNYLGQNSWFLPTQVDLVATKVKDALNFWLQAGVDGFQVRDVGNLTNAALHLAEWRNITKSFSEDRLLIAGTESSDLHQILSLLESTKDLLLTSSYLSASGVSGENMKFLVTQYLNATDSHWCSWSLSQAGLLTSFVPAQLLRLYQLLLFTLPGTPVFSYGDEIGLQAAALPGEPAKAPVMLWDESSLPSASVSANMTVKGQDEDSGSLLSLFRRLSDQRGKERSLLHGDFHALSTGSNLFSYVRHWDQNERFLVVLNFGDESLSARLGASSLPAGASLPARADLLLSTHPGREEGTSLALEHLNLEPHEGLLLHFPYVA.

Positions 1-20 (MSQDTEVDMKEVELNELEPE) are disordered. Over 1 to 84 (MSQDTEVDMK…SPGWVRTRWA (84 aa)) the chain is Cytoplasmic. Serine 2 is subject to Phosphoserine. Threonine 5 is subject to Phosphothreonine. Over residues 7-20 (VDMKEVELNELEPE) the composition is skewed to basic and acidic residues. Residue lysine 49 forms a Glycyl lysine isopeptide (Lys-Gly) (interchain with G-Cter in ubiquitin) linkage. Residue serine 65 is modified to Phosphoserine. Lysine 66 participates in a covalent cross-link: Glycyl lysine isopeptide (Lys-Gly) (interchain with G-Cter in SUMO2). Residues 85 to 105 (LLLLFWLGWIGMLAGAVVIIV) form a helical; Signal-anchor for type II membrane protein membrane-spanning segment. Residues 106-529 (RAPRCRELPV…GLLLHFPYVA (424 aa)) are Extracellular-facing. An N-linked (GlcNAc...) asparagine glycan is attached at asparagine 266. Phosphoserine occurs at positions 307 and 309. N-linked (GlcNAc...) asparagine glycosylation is found at asparagine 325 and asparagine 405. A Phosphoserine modification is found at serine 426.

It belongs to the SLC3A transporter family. Disulfide-linked heterodimer with a non-glycosylated light chain (SLC7A5, SLC7A6, SLC7A7, SLC7A8, SLC7A10 or SLC7A11). Interacts with TLCD3A/CT120 and ICAM1. Constitutively and specifically associates with beta-1 integrins (alpha-2/beta-1, alpha-3/beta-1, alpha-5/beta-1 and alpha-6/beta-1), but minimally with alpha-4/beta-1. Interacts with LAPTM4B; recruits SLC3A2 and SLC7A5 to lysosomes to promote leucine uptake into these organelles and is required for mTORC1 activation. Phosphorylation on Ser-307 or Ser-309 and on Ser-426 by ecto-protein kinases favors heterotypic cell-cell interactions. In terms of processing, N-glycosylated; N-glycosylation is crucial for trafficking and stability of SLC3A2 to the plasma membrane.

The protein localises to the apical cell membrane. It is found in the cell membrane. It localises to the cell junction. The protein resides in the lysosome membrane. Its subcellular location is the melanosome. The protein localises to the basolateral cell membrane. Its function is as follows. Acts as a chaperone that facilitates biogenesis and trafficking of functional transporters heterodimers to the plasma membrane. Forms heterodimer with SLC7 family transporters (SLC7A5, SLC7A6, SLC7A7, SLC7A8, SLC7A10 and SLC7A11), a group of amino-acid antiporters. Heterodimers function as amino acids exchangers, the specificity of the substrate depending on the SLC7A subunit. Heterodimers formed by SLC3A2/SLC7A6 or SLC3A2/SLC7A7 mediate the uptake of dibasic amino acids. Heterodimer SLC3A2/SLC7A11 functions as an antiporter by mediating the exchange of extracellular anionic L-cystine and intracellular L-glutamate across the cellular plasma membrane. SLC3A2/SLC7A10 translocates small neutral L- and D-amino acids across the plasma membrane. SLC3A2/SLC75 or SLC3A2/SLC7A8 translocates neutral amino acids with broad specificity, thyroid hormones and L-DOPA. SLC3A2 is essential for plasma membrane localization, stability, and the transport activity of SLC7A5 and SLC7A8. When associated with LAPTM4B, the heterodimer SLC7A5 is recruited to lysosomes to promote leucine uptake into these organelles, and thereby mediates mTORC1 activation. Modulates integrin-related signaling and is essential for integrin-dependent cell spreading, migration and tumor progression. The chain is Amino acid transporter heavy chain SLC3A2 from Oryctolagus cuniculus (Rabbit).